We begin with the raw amino-acid sequence, 209 residues long: Ribosomal RNA large subunit methyltransferase E (209 aa).

S-adenosyl-L-methionine-binding residues include G63, W65, D83, D99, and D124. The Proton acceptor role is filled by K164.

It belongs to the class I-like SAM-binding methyltransferase superfamily. RNA methyltransferase RlmE family.

The protein resides in the cytoplasm. It carries out the reaction uridine(2552) in 23S rRNA + S-adenosyl-L-methionine = 2'-O-methyluridine(2552) in 23S rRNA + S-adenosyl-L-homocysteine + H(+). Functionally, specifically methylates the uridine in position 2552 of 23S rRNA at the 2'-O position of the ribose in the fully assembled 50S ribosomal subunit. The polypeptide is Ribosomal RNA large subunit methyltransferase E (Shewanella putrefaciens (strain CN-32 / ATCC BAA-453)).